Consider the following 154-residue polypeptide: Deoxyuridine 5'-triphosphate nucleotidohydrolase (154 aa).

Substrate-binding positions include 68–70 (RSG), N81, and 85–87 (TID).

Belongs to the dUTPase family. Mg(2+) is required as a cofactor.

The catalysed reaction is dUTP + H2O = dUMP + diphosphate + H(+). It functions in the pathway pyrimidine metabolism; dUMP biosynthesis; dUMP from dCTP (dUTP route): step 2/2. Functionally, this enzyme is involved in nucleotide metabolism: it produces dUMP, the immediate precursor of thymidine nucleotides and it decreases the intracellular concentration of dUTP so that uracil cannot be incorporated into DNA. This Acidiphilium cryptum (strain JF-5) protein is Deoxyuridine 5'-triphosphate nucleotidohydrolase.